We begin with the raw amino-acid sequence, 211 residues long: Imidazole glycerol phosphate synthase subunit HisH (211 aa).

The Glutamine amidotransferase type-1 domain maps to 4–211 (TVALLDYGSG…QLLRNWINHI (208 aa)). The Nucleophile role is filled by C82. Active-site residues include H192 and E194.

As to quaternary structure, heterodimer of HisH and HisF.

Its subcellular location is the cytoplasm. The catalysed reaction is 5-[(5-phospho-1-deoxy-D-ribulos-1-ylimino)methylamino]-1-(5-phospho-beta-D-ribosyl)imidazole-4-carboxamide + L-glutamine = D-erythro-1-(imidazol-4-yl)glycerol 3-phosphate + 5-amino-1-(5-phospho-beta-D-ribosyl)imidazole-4-carboxamide + L-glutamate + H(+). The enzyme catalyses L-glutamine + H2O = L-glutamate + NH4(+). Its pathway is amino-acid biosynthesis; L-histidine biosynthesis; L-histidine from 5-phospho-alpha-D-ribose 1-diphosphate: step 5/9. In terms of biological role, IGPS catalyzes the conversion of PRFAR and glutamine to IGP, AICAR and glutamate. The HisH subunit catalyzes the hydrolysis of glutamine to glutamate and ammonia as part of the synthesis of IGP and AICAR. The resulting ammonia molecule is channeled to the active site of HisF. The sequence is that of Imidazole glycerol phosphate synthase subunit HisH from Corynebacterium efficiens (strain DSM 44549 / YS-314 / AJ 12310 / JCM 11189 / NBRC 100395).